Reading from the N-terminus, the 104-residue chain is UPF0145 protein TM1040_1243 (104 aa).

This sequence belongs to the UPF0145 family.

The polypeptide is UPF0145 protein TM1040_1243 (Ruegeria sp. (strain TM1040) (Silicibacter sp.)).